A 409-amino-acid polypeptide reads, in one-letter code: Histidine--tRNA ligase (409 aa).

The protein belongs to the class-II aminoacyl-tRNA synthetase family.

The protein localises to the cytoplasm. The enzyme catalyses tRNA(His) + L-histidine + ATP = L-histidyl-tRNA(His) + AMP + diphosphate + H(+). The sequence is that of Histidine--tRNA ligase from Methanosphaerula palustris (strain ATCC BAA-1556 / DSM 19958 / E1-9c).